We begin with the raw amino-acid sequence, 274 residues long: tRNA-cytidine(32) 2-sulfurtransferase (274 aa).

A PP-loop motif motif is present at residues 40–45 (SGGKDS). Positions 115, 118, and 206 each coordinate [4Fe-4S] cluster.

It belongs to the TtcA family. As to quaternary structure, homodimer. The cofactor is Mg(2+). [4Fe-4S] cluster is required as a cofactor.

The protein resides in the cytoplasm. The catalysed reaction is cytidine(32) in tRNA + S-sulfanyl-L-cysteinyl-[cysteine desulfurase] + AH2 + ATP = 2-thiocytidine(32) in tRNA + L-cysteinyl-[cysteine desulfurase] + A + AMP + diphosphate + H(+). Its pathway is tRNA modification. Functionally, catalyzes the ATP-dependent 2-thiolation of cytidine in position 32 of tRNA, to form 2-thiocytidine (s(2)C32). The sulfur atoms are provided by the cysteine/cysteine desulfurase (IscS) system. This chain is tRNA-cytidine(32) 2-sulfurtransferase, found in Pseudomonas paraeruginosa (strain DSM 24068 / PA7) (Pseudomonas aeruginosa (strain PA7)).